A 222-amino-acid chain; its full sequence is N-(5'-phosphoribosyl)anthranilate isomerase (222 aa).

This sequence belongs to the TrpF family.

The enzyme catalyses N-(5-phospho-beta-D-ribosyl)anthranilate = 1-(2-carboxyphenylamino)-1-deoxy-D-ribulose 5-phosphate. Its pathway is amino-acid biosynthesis; L-tryptophan biosynthesis; L-tryptophan from chorismate: step 3/5. The polypeptide is N-(5'-phosphoribosyl)anthranilate isomerase (Symbiobacterium thermophilum (strain DSM 24528 / JCM 14929 / IAM 14863 / T)).